The sequence spans 130 residues: Small ribosomal subunit protein uS9 (130 aa).

The protein belongs to the universal ribosomal protein uS9 family.

This chain is Small ribosomal subunit protein uS9, found in Methylococcus capsulatus (strain ATCC 33009 / NCIMB 11132 / Bath).